Here is a 284-residue protein sequence, read N- to C-terminus: Undecaprenyl-diphosphatase (284 aa).

Transmembrane regions (helical) follow at residues 7 to 27, 44 to 64, 90 to 110, 116 to 136, 167 to 187, 197 to 217, 229 to 249, and 259 to 279; these read IILG…TGHL, EMFD…LYFH, LWLK…PLND, FYHF…FIVI, VLSL…ALLV, FTFF…ILHF, FGVL…AIKF, and FTFF…YAMF.

The protein belongs to the UppP family.

It is found in the cell membrane. The catalysed reaction is di-trans,octa-cis-undecaprenyl diphosphate + H2O = di-trans,octa-cis-undecaprenyl phosphate + phosphate + H(+). In terms of biological role, catalyzes the dephosphorylation of undecaprenyl diphosphate (UPP). Confers resistance to bacitracin. The protein is Undecaprenyl-diphosphatase of Lactococcus lactis subsp. lactis (strain IL1403) (Streptococcus lactis).